A 76-amino-acid polypeptide reads, in one-letter code: Small ribosomal subunit protein bS16 (76 aa).

It belongs to the bacterial ribosomal protein bS16 family.

The sequence is that of Small ribosomal subunit protein bS16 from Sulfurovum sp. (strain NBC37-1).